The chain runs to 828 residues: Periplasmic nitrate reductase (828 aa).

The segment at residues 1–31 is a signal peptide (tat-type signal); the sequence is MKLSRRSFMKANAVAAAAAAAGLSVPGVARA. The 57-residue stretch at 39 to 95 folds into the 4Fe-4S Mo/W bis-MGD-type domain; that stretch reads IKWDKAPCRFCGTGCGVLVGTQQGRVVACQGDPDAPVNRGLNCIKGYFLPKIMYGKD. The [4Fe-4S] cluster site is built by Cys-46, Cys-49, Cys-53, and Cys-81. Mo-bis(molybdopterin guanine dinucleotide) contacts are provided by residues Lys-83, Gln-150, Asn-175, Cys-179, 212 to 219, 243 to 247, 262 to 264, Met-372, Gln-376, Asn-482, 508 to 509, Lys-531, Asp-558, and 718 to 727; these read WGANMAEM, STYQH, QSD, SD, and TGRVLEHWHT. Phe-794 contributes to the substrate binding site. Mo-bis(molybdopterin guanine dinucleotide)-binding residues include Asn-802 and Lys-819.

This sequence belongs to the prokaryotic molybdopterin-containing oxidoreductase family. NasA/NapA/NarB subfamily. As to quaternary structure, component of the periplasmic nitrate reductase NapAB complex composed of NapA and NapB. Requires [4Fe-4S] cluster as cofactor. Mo-bis(molybdopterin guanine dinucleotide) serves as cofactor. Post-translationally, predicted to be exported by the Tat system. The position of the signal peptide cleavage has not been experimentally proven.

Its subcellular location is the periplasm. The catalysed reaction is 2 Fe(II)-[cytochrome] + nitrate + 2 H(+) = 2 Fe(III)-[cytochrome] + nitrite + H2O. Catalytic subunit of the periplasmic nitrate reductase complex NapAB. Receives electrons from NapB and catalyzes the reduction of nitrate to nitrite. This Escherichia coli O7:K1 (strain IAI39 / ExPEC) protein is Periplasmic nitrate reductase.